A 215-amino-acid chain; its full sequence is KID-containing protein 1 (215 aa).

Disordered stretches follow at residues 1-132 (MAGG…NKKR) and 150-183 (NPKS…GDVL). The span at 64–81 (DSEEEDEESEEDNDEEEL) shows a compositional bias: acidic residues. The short motif at 129-137 (NKKRRLQIY) is the Nuclear localization signal element. Over residues 162–175 (DNDDEEGDDGDLSD) the composition is skewed to acidic residues. Positions 177 to 204 (ERGGDVLARRPSFKNRALKSMSCFALSD) are kinase-inducible domain (KID). Position 188 is a phosphoserine; by PKA (Ser188).

In terms of assembly, interacts with HDA19; Ser-188 is critical for this interaction. In terms of tissue distribution, strongly expressed in stems, flowers, roots and immature siliques, but not detected in leaf blades of seedlings.

It localises to the nucleus. Its function is as follows. Transcription activator which may regulates gene expression through interaction with the histone deacetylase HDA19. This chain is KID-containing protein 1, found in Brassica napus (Rape).